Consider the following 197-residue polypeptide: Imidazoleglycerol-phosphate dehydratase (197 aa).

This sequence belongs to the imidazoleglycerol-phosphate dehydratase family.

The protein resides in the cytoplasm. It catalyses the reaction D-erythro-1-(imidazol-4-yl)glycerol 3-phosphate = 3-(imidazol-4-yl)-2-oxopropyl phosphate + H2O. Its pathway is amino-acid biosynthesis; L-histidine biosynthesis; L-histidine from 5-phospho-alpha-D-ribose 1-diphosphate: step 6/9. This Pseudomonas putida (strain ATCC 700007 / DSM 6899 / JCM 31910 / BCRC 17059 / LMG 24140 / F1) protein is Imidazoleglycerol-phosphate dehydratase.